Reading from the N-terminus, the 780-residue chain is Cullin-5 (780 aa).

At Ser34 the chain carries Phosphoserine. Phosphothreonine is present on Thr210. The region spanning 711–772 (RILRTQEAII…HKYIRRDEAD (62 aa)) is the Cullin neddylation domain. Lys724 is covalently cross-linked (Glycyl lysine isopeptide (Lys-Gly) (interchain with G-Cter in NEDD8)).

It belongs to the cullin family. In terms of assembly, component of multiple cullin-5-RING E3 ubiquitin-protein ligase complexes (ECS complexes, also named CRL5 complexes) formed of CUL5, Elongin BC (ELOB and ELOC), RNF7/RBX2 and a variable SOCS box domain-containing protein as substrate-specific recognition component. CUL5-containing ECS complexes specifically contain RNF7/RBX2, and not RBX1, as catalytic subunit. Component of the ECS(ASB2) complex with the substrate recognition component ASB2. Component of the ECS(ASB6) complex with the substrate recognition component ASB6. Component of the ECS(ASB7) complex with the substrate recognition component ASB7. Component of the ECS(ASB9) complex with the substrate recognition component ASB9. Component of the ECS(ASB11) complex with the substrate recognition component ASB11. Component of the ECS(ASB12) complex with the substrate recognition component ASB12. Component of the ECS(LRRC41) complex with the substrate recognition component LRRC41. Component of the ECS(SOCS1) complex with the substrate recognition component SOCS1. Component of the ECS(SOCS2) complex with the substrate recognition component SOCS2. Component of the ECS(WSB1) complex with the substrate recognition subunit WSB1. Component of the ECS(SOCS3) complex with the substrate recognition component SOCS3. Component of the ECS(SOCS7) complex with the substrate recognition component SOCS7. Component of the ECS(SPSB1) complex with the substrate recognition component SPSB1. Component of the ECS(SPSB3) complex with the substrate recognition component SPSB3. Component of the ECS(SPSB2) complex with the substrate recognition component SPSB2. Component of the ECS(SPSB4) complex with the substrate recognition component SPSB4. Component of the ECS(RAB40) complex with the substrate recognition subunit RAB40A, RAB40B or RAB40C. Component of the ECS(KLHDC1) complex with the substrate recognition component KLHDC1. Component of the ECS(PCMTD1) complex with the substrate recognition subunit PCMTD1. May also form complexes containing RBX1 and ELOA or VHL; additional evidence is however required to confirm this result in vivo. Interacts (when neddylated) with ARIH2; leading to activate the E3 ligase activity of ARIH2. Interacts with ERCC6; the interaction is induced by DNA damaging agents or inhibitors of RNA polymerase II elongation. Interacts with ELOA (via the BC-box). Interacts (unneddylated form) with DCUN1D1, DCUN1D2, DCUN1D3, DCUN1D4 and DCUN1D5; these interactions promote the cullin neddylation. Post-translationally, neddylated; which enhances the ubiquitination activity of ECS complexes and prevents binding of the inhibitor CAND1. Deneddylated via its interaction with the COP9 signalosome (CSN).

The protein localises to the nucleus. The protein operates within protein modification; protein ubiquitination. Core component of multiple cullin-5-RING E3 ubiquitin-protein ligase complexes (ECS complexes, also named CRL5 complexes), which mediate the ubiquitination and subsequent proteasomal degradation of target proteins. Acts a scaffold protein that contributes to catalysis through positioning of the substrate and the ubiquitin-conjugating enzyme. The functional specificity of the E3 ubiquitin-protein ligase complex depends on the variable SOCS box-containing substrate recognition component. Acts as a key regulator of neuron positioning during cortex development: component of various SOCS-containing ECS complexes, such as the ECS(SOCS7) complex, that regulate reelin signaling by mediating ubiquitination and degradation of DAB1. ECS(SOCS1) seems to direct ubiquitination of JAK2. The ECS(SOCS2) complex mediates the ubiquitination and subsequent proteasomal degradation of phosphorylated EPOR and GHR. The ECS(SPSB3) complex catalyzes ubiquitination of nuclear CGAS. ECS(KLHDC1) complex is part of the DesCEND (destruction via C-end degrons) pathway and mediates ubiquitination and degradation of truncated SELENOS selenoprotein produced by failed UGA/Sec decoding, which ends with a glycine. The ECS(ASB9) complex mediates ubiquitination and degradation of CKB. As part of some ECS complex, promotes 'Lys-11'-linked ubiquitination and degradation of BTRC. As part of a multisubunit ECS complex, polyubiquitinates monoubiquitinated POLR2A. As part of the ECS(RAB40C) complex, mediates ANKRD28 ubiquitination and degradation, thereby regulating protein phosphatase 6 (PP6) complex activity and focal adhesion assembly during cell migration. As part of the ECS(RAB40A) complex, mediates RHOU 'Lys-48'-linked ubiquitination and degradation, thus inhibiting focal adhesion disassembly during cell migration. As part of the ECS(RAB40B) complex, mediates LIMA1/EPLIN and RAP2 ubiquitination, thereby regulating actin cytoskeleton dynamics and stress fiber formation during cell migration. May form a cell surface vasopressin receptor. The sequence is that of Cullin-5 from Rattus norvegicus (Rat).